A 313-amino-acid polypeptide reads, in one-letter code: Ribosomal RNA small subunit methyltransferase H (313 aa).

S-adenosyl-L-methionine is bound by residues 35-37 (GGH), aspartate 55, phenylalanine 79, aspartate 101, and glutamine 108.

It belongs to the methyltransferase superfamily. RsmH family.

It localises to the cytoplasm. The catalysed reaction is cytidine(1402) in 16S rRNA + S-adenosyl-L-methionine = N(4)-methylcytidine(1402) in 16S rRNA + S-adenosyl-L-homocysteine + H(+). In terms of biological role, specifically methylates the N4 position of cytidine in position 1402 (C1402) of 16S rRNA. This Escherichia coli O6:H1 (strain CFT073 / ATCC 700928 / UPEC) protein is Ribosomal RNA small subunit methyltransferase H.